The sequence spans 457 residues: MTKKVYVKTFGCQMNEYDSDKMVDVLNAAEGLEKTDTPEDADIILFNTCSVREKAQEKVFSDLGRVRELKEAKPGLLIGVGGCVASQEGASIVSRAPYVDLVFGPQTLHRLPQMIDARRESGRAQVDISFPEIEKFDHLPPARVEGPSAFVSIMEGCSKYCSYCVVPYTRGDEVSRPLDDVLTEVAGLADQGVREVTLLGQNVNAYRGALAAGSSEIADFATLIEYVADIPGIERIRYTTSHPKEFTQRLIDTYAKVPKLVNHLHLPVQHGSDRILMAMKRGYTVLEYKSVIRKLRAIRPDLSLSTDMIVGFPGETEDDFDKMMALVHEMSYDTSFSFIYSPRPGTPAANLHDDTPRDVKLKRLQHLQATIEENVARISQSMVGKVERILVEGPSRKDPNELAGRTENNRVVNFPAPLASHPRLIGQMIDVKINHAYPHSLRGELVLVSDDASAATH.

One can recognise an MTTase N-terminal domain in the interval 3–120 (KKVYVKTFGC…LPQMIDARRE (118 aa)). Cys-12, Cys-49, Cys-83, Cys-157, Cys-161, and Cys-164 together coordinate [4Fe-4S] cluster. The Radical SAM core domain maps to 143 to 377 (RVEGPSAFVS…QATIEENVAR (235 aa)). A TRAM domain is found at 380–447 (QSMVGKVERI…PHSLRGELVL (68 aa)).

This sequence belongs to the methylthiotransferase family. MiaB subfamily. In terms of assembly, monomer. Requires [4Fe-4S] cluster as cofactor.

Its subcellular location is the cytoplasm. It catalyses the reaction N(6)-dimethylallyladenosine(37) in tRNA + (sulfur carrier)-SH + AH2 + 2 S-adenosyl-L-methionine = 2-methylsulfanyl-N(6)-dimethylallyladenosine(37) in tRNA + (sulfur carrier)-H + 5'-deoxyadenosine + L-methionine + A + S-adenosyl-L-homocysteine + 2 H(+). In terms of biological role, catalyzes the methylthiolation of N6-(dimethylallyl)adenosine (i(6)A), leading to the formation of 2-methylthio-N6-(dimethylallyl)adenosine (ms(2)i(6)A) at position 37 in tRNAs that read codons beginning with uridine. The sequence is that of tRNA-2-methylthio-N(6)-dimethylallyladenosine synthase from Burkholderia lata (strain ATCC 17760 / DSM 23089 / LMG 22485 / NCIMB 9086 / R18194 / 383).